We begin with the raw amino-acid sequence, 349 residues long: Nitrilase, bromoxynil-specific (349 aa).

In terms of domain architecture, CN hydrolase spans 5–274 (FKAAAVQAEP…EGIVYAEIDL (270 aa)). The Proton acceptor role is filled by glutamate 45. The active-site Proton donor is the lysine 127. Cysteine 161 (nucleophile) is an active-site residue.

This sequence belongs to the carbon-nitrogen hydrolase superfamily. Nitrilase family. In terms of assembly, homodimer.

The catalysed reaction is a nitrile + 2 H2O = a carboxylate + NH4(+). Its function is as follows. Specific for the herbicide bromoxynil (3,5-dibromo-4-hydroxybenzonitrile); converts it to its metabolite 3,5-dibromo-4-hydroxybenzoic acid. In Klebsiella pneumoniae subsp. ozaenae, this protein is Nitrilase, bromoxynil-specific (bxn).